The following is a 184-amino-acid chain: Peptidoglycan-recognition protein SC2 (184 aa).

The signal sequence occupies residues 1–20; the sequence is MANKALILLAVLFCAQAVLG. Residues 45-169 enclose the N-acetylmuramoyl-L-alanine amidase domain; it reads SYAVIHHTAG…RQVGSTECPG (125 aa). A Zn(2+)-binding site is contributed by His50. Cys57 and Cys63 are oxidised to a cystine. Zn(2+) is bound by residues His159 and Cys167.

It belongs to the N-acetylmuramoyl-L-alanine amidase 2 family. Requires Zn(2+) as cofactor. In terms of tissue distribution, constitutively expressed at high level in gut, in addition to the induced expression in fat body.

The protein localises to the secreted. The enzyme catalyses Hydrolyzes the link between N-acetylmuramoyl residues and L-amino acid residues in certain cell-wall glycopeptides.. Functionally, N-acetylmuramyl-L-alanine amidase involved in innate immunity by degrading bacterial peptidoglycans (PGN). Probably plays a scavenger role by digesting biologically active PGN into biologically inactive fragments. Has no direct bacteriolytic activity. This Drosophila melanogaster (Fruit fly) protein is Peptidoglycan-recognition protein SC2 (PGRP-SC2).